We begin with the raw amino-acid sequence, 396 residues long: tRNA (guanine-N(7)-)-methyltransferase non-catalytic subunit wuho (396 aa).

WD repeat units lie at residues 75-115 (KVEV…AQLL), 162-201 (GHLSIVYDVLWSEDQQYIITCDRDDKIRVTNYPATFDIHS), 205-243 (GHKEFVSGLAMLTEQHIISASGDKTLRVWNYTCGKELLL), and 302-342 (AGTW…RASG).

It belongs to the WD repeat TRM82 family. Forms a heterodimer with the catalytic subunit Mettl1. Interacts with mei-P26 and weakly interacts with bgcn; required for the function or formation of the mei-P26-bgcn-bam-sxl complex. Interacts with nanos; may be involved in mei-P26-dependent derepression of the BMP signaling pathway. Interacts with Myc; the interaction may be mediated by mei-P26 and may be involved in the regulation of ribosome biogenesis. As to expression, in testis, it is present at high level in hub cells, a niche for germline stem cells of testis. Ubiquitously expressed in all testicular cells throughout spermatogenesis. Ubiquitously expressed in all germline and somatic cells of the ovary.

The protein resides in the nucleus. It localises to the cytoplasm. It participates in tRNA modification; N(7)-methylguanine-tRNA biosynthesis. Required for the Mettl1-dependent formation of N(7)-methylguanine at position 46 (m7G46) in tRNA. In the Mettl1-wuho methyltransferase complex, it is required to stabilize and induce conformational changes of the catalytic subunit. Required for binding of nanos mRNA and repression of translation by the mei-P26-bgcn-bam-sxl complex. May cooperate with mei-P26 and nanos to derepress the BMP signaling pathway. May cooperate with mei-P26 to suppress expression of a subset of microRNAs. May cooperate with mei-P26 to regulate bam expression levels in germline cells during gametogenesis. Required to promote mitosis to meiosis transition during gametogenesis. May regulate germline cell division in part by regulating ribosome biogenesis. In Drosophila pseudoobscura pseudoobscura (Fruit fly), this protein is tRNA (guanine-N(7)-)-methyltransferase non-catalytic subunit wuho.